An 83-amino-acid chain; its full sequence is Aspergillic acid biosynthesis cluster protein F (83 aa).

It functions in the pathway secondary metabolite biosynthesis. Part of the gene cluster that mediates the biosynthesis of aspergillic acid, a hydroxamic acid-containing pyrazinone with aliphatic side chains that originates from leucine (Leu) and isoleucine (Ile). Aspergillic acid has antibiotic properties and was shown to be lethal to mice. The first step in the pathway is the production of deoxyaspergillic acid via a condensation between the Ile amine and the Leu carboxylic acid, followed by a reductive release from the protein forming the dipeptide aldehyde NH(2)-Leu-Ile-CHO, which could undergo an intermolecular cyclization resulting in a dihydropyrazinone. As the NRPS asaC lacks a condensation domain, it is improbable that it is responsible for condensation of Leu and Ile. One possibility is that asaC acts on a previously condensed dipeptide and functions as a Leu-Ile reductase to yield deoxyaspergillic acid. After asaC forms deoxyaspergillic acid, the cytochrome P450 asaD oxidizes the pyrazinone to the hydroxamic acid-containing bioactive metabolite aspergillic acid. The hydroxylase/desaturase asaB can then convert aspergillic acid to hydroxyaspergillic acid. Both aspergillic acid and hydroxyaspergillic acid can form complexes with iron producing ferriaspergillin analogs. This Aspergillus flavus (strain ATCC 200026 / FGSC A1120 / IAM 13836 / NRRL 3357 / JCM 12722 / SRRC 167) protein is Aspergillic acid biosynthesis cluster protein F.